Reading from the N-terminus, the 344-residue chain is Methionine import ATP-binding protein MetN (344 aa).

Residues isoleucine 2 to isoleucine 241 form the ABC transporter domain. Glycine 38–serine 45 is an ATP binding site.

Belongs to the ABC transporter superfamily. Methionine importer (TC 3.A.1.24) family. The complex is composed of two ATP-binding proteins (MetN), two transmembrane proteins (MetI) and a solute-binding protein (MetQ).

The protein resides in the cell inner membrane. It carries out the reaction L-methionine(out) + ATP + H2O = L-methionine(in) + ADP + phosphate + H(+). It catalyses the reaction D-methionine(out) + ATP + H2O = D-methionine(in) + ADP + phosphate + H(+). Its function is as follows. Part of the ABC transporter complex MetNIQ involved in methionine import. Responsible for energy coupling to the transport system. The polypeptide is Methionine import ATP-binding protein MetN (Vibrio vulnificus (strain YJ016)).